Consider the following 145-residue polypeptide: Glycine-rich protein (145 aa).

Residues 1–19 (MKLTLAVVVVFAYIATTNA) form the signal peptide.

As to expression, component of the acid-insoluble and acid-soluble organic matrix of calcified layers of the shell (at protein level).

Its subcellular location is the secreted. This is Glycine-rich protein from Lottia gigantea (Giant owl limpet).